The sequence spans 1025 residues: DNA polymerase (1025 aa).

The protein belongs to the DNA polymerase type-B family.

It catalyses the reaction DNA(n) + a 2'-deoxyribonucleoside 5'-triphosphate = DNA(n+1) + diphosphate. In terms of biological role, replicates the viral genome. Host DNA polymerases cannot substitute for the viral enzyme in this process. This is DNA polymerase from Noctuidae (owlet moths).